The following is a 512-amino-acid chain: Ankyrin repeat domain-containing protein SOWAHC (512 aa).

Phosphoserine is present on residues Ser82 and Ser125. The tract at residues 126–248 is disordered; sequence LGLGGEVSDQ…AEEESSVGAS (123 aa). The span at 173-186 shows a compositional bias: low complexity; sequence PPQGEAEGGSSPSG. At Ser205 the chain carries Phosphoserine. The segment covering 214–228 has biased composition (gly residues); the sequence is PGDGNAGGRSRGGGD. Residues 229–248 are compositionally biased toward low complexity; that stretch reads SDTASLASSSAEEESSVGAS. ANK repeat units follow at residues 288 to 317 and 327 to 357; these read TGFT…KHQL and GGYT…DVDI. Arg395 is subject to Omega-N-methylarginine. Positions 427–500 are disordered; the sequence is HVPEGWTGGS…EERSLRGYSS (74 aa). The segment covering 453–462 has biased composition (basic residues); sequence MKPRLNKIRF. Residues 481–492 are compositionally biased toward acidic residues; it reads EEGEEEEEEEEE.

Belongs to the SOWAH family.

The sequence is that of Ankyrin repeat domain-containing protein SOWAHC (Sowahc) from Mus musculus (Mouse).